We begin with the raw amino-acid sequence, 145 residues long: D-aminoacyl-tRNA deacylase (145 aa).

Positions 137–138 (GP) match the Gly-cisPro motif, important for rejection of L-amino acids motif.

This sequence belongs to the DTD family. As to quaternary structure, homodimer.

The protein resides in the cytoplasm. It carries out the reaction glycyl-tRNA(Ala) + H2O = tRNA(Ala) + glycine + H(+). The catalysed reaction is a D-aminoacyl-tRNA + H2O = a tRNA + a D-alpha-amino acid + H(+). An aminoacyl-tRNA editing enzyme that deacylates mischarged D-aminoacyl-tRNAs. Also deacylates mischarged glycyl-tRNA(Ala), protecting cells against glycine mischarging by AlaRS. Acts via tRNA-based rather than protein-based catalysis; rejects L-amino acids rather than detecting D-amino acids in the active site. By recycling D-aminoacyl-tRNA to D-amino acids and free tRNA molecules, this enzyme counteracts the toxicity associated with the formation of D-aminoacyl-tRNA entities in vivo and helps enforce protein L-homochirality. The polypeptide is D-aminoacyl-tRNA deacylase (Citrobacter koseri (strain ATCC BAA-895 / CDC 4225-83 / SGSC4696)).